The primary structure comprises 617 residues: Probable endochitinase (617 aa).

One can recognise a GH18 domain in the interval 53–426; it reads YIRPCYFTNW…SVIAKELGGV (374 aa). Cysteine 57 and cysteine 82 are disulfide-bonded. Chitin-binding positions include 109 to 110 and 136 to 139; these read DW and GGWS. The Proton donor role is filled by glutamate 179. Residues tyrosine 180 and 245–248 contribute to the chitin site; that span reads MSYD. N-linked (GlcNAc...) asparagine glycosylation occurs at asparagine 310. Tryptophan 394 serves as a coordination point for chitin. Chitin-binding type-2 domains lie at 478–534 and 563–617; these read TNVC…GCSV and AFKC…KCAK. 2 disulfides stabilise this stretch: cysteine 511-cysteine 524 and cysteine 594-cysteine 607.

This sequence belongs to the glycosyl hydrolase 18 family. Chitinase class II subfamily.

The enzyme catalyses Random endo-hydrolysis of N-acetyl-beta-D-glucosaminide (1-&gt;4)-beta-linkages in chitin and chitodextrins.. In Caenorhabditis elegans, this protein is Probable endochitinase (cht-1).